The primary structure comprises 90 residues: Chromosomal protein MC1c (90 aa).

In terms of biological role, protects DNA against thermal denaturation and modulates transcription. This Methanothrix soehngenii (Methanosaeta concilii) protein is Chromosomal protein MC1c.